The following is a 248-amino-acid chain: MAGHSQFKNIMHRKGKQDAQRSKAFSKLAREITVAAKLGTPDPAMNPRLRAAVIAARQENMPKDNIERAIKKAIGGDSENYDEIRYEGYGPGGVAVIVEALTDNRNRAASDIRSYFTKSGGNLGETGSVSFMFDRTGVIEYDAGKASADDMLDAAIEAGADDVLSSEGGHEVFASQETFRDVAKALEAKFGEPRKAALIWKPQNTVAVDDETGEKLFKLMEHLNEHDDVQNVYANFEVSDALMAKMAG.

Residues 1–22 form a disordered region; the sequence is MAGHSQFKNIMHRKGKQDAQRS.

It belongs to the TACO1 family.

The protein resides in the cytoplasm. The polypeptide is Probable transcriptional regulatory protein RPD_4171 (Rhodopseudomonas palustris (strain BisB5)).